Here is a 208-residue protein sequence, read N- to C-terminus: Small ribosomal subunit protein uS5 (208 aa).

The span at 1–19 shows a compositional bias: polar residues; it reads MTDSNNQSPNKKTSGSSGA. Residues 1 to 54 form a disordered region; the sequence is MTDSNNQSPNKKTSGSSGAPTAADGRQENRRSRGEKRGGRRDRRGQERDSEWQE. 2 stretches are compositionally biased toward basic and acidic residues: residues 25–37 and 44–54; these read GRQENRRSRGEKR and RGQERDSEWQE. Positions 52 to 115 constitute an S5 DRBM domain; it reads WQERVVQIRR…ADGKKHLVRV (64 aa).

It belongs to the universal ribosomal protein uS5 family. As to quaternary structure, part of the 30S ribosomal subunit. Contacts proteins S4 and S8.

Its function is as follows. With S4 and S12 plays an important role in translational accuracy. In terms of biological role, located at the back of the 30S subunit body where it stabilizes the conformation of the head with respect to the body. The polypeptide is Small ribosomal subunit protein uS5 (Prochlorococcus marinus (strain NATL1A)).